The primary structure comprises 421 residues: MDSISLLPDDFLLRILSLLPTKDVLNTSVLSKRWRYLWKLVPKLQYSLIDKNADHGTFVRFVDRSLLLSMAPVLESLHLKLGRQCSEVDIGFWVRIAVEKGLCELDFDYEHYKTEPCRLPQSLFTCGTLTVLKLKNVSLKDVQFPVCFKLLKTLHLEYVIFLDKETPQKLLSSCPILEVFDLTRDDDDVDNVMSFSVMVPSLQRFIYCGGSGAELVMNTPSLKYLKLSGCGYECMIGNLPEIVEAHVEVACSTDDILTSLASVKRLLLCLPTEPELPTGTIFHQLEHLEFCSCCTEWDILMFMLKHSPKLRSLKLNETHGYTIVSQSDPMFHWEEPSSVPETLMFVLETLEWRNYRGLKMENELASFLLKHSRRLKIATFSPADCKQVRIELRTTVGMKYRILMELARLPRGSAECELVFG.

Residues 1-52 enclose the F-box domain; the sequence is MDSISLLPDDFLLRILSLLPTKDVLNTSVLSKRWRYLWKLVPKLQYSLIDKN. The FBD domain occupies 332-382; sequence HWEEPSSVPETLMFVLETLEWRNYRGLKMENELASFLLKHSRRLKIATFSP.

This Arabidopsis thaliana (Mouse-ear cress) protein is FBD-associated F-box protein At5g56370.